The following is a 121-amino-acid chain: Large ribosomal subunit protein uL18 (121 aa).

This sequence belongs to the universal ribosomal protein uL18 family. As to quaternary structure, part of the 50S ribosomal subunit; part of the 5S rRNA/L5/L18/L25 subcomplex. Contacts the 5S and 23S rRNAs.

Functionally, this is one of the proteins that bind and probably mediate the attachment of the 5S RNA into the large ribosomal subunit, where it forms part of the central protuberance. This Acidovorax ebreus (strain TPSY) (Diaphorobacter sp. (strain TPSY)) protein is Large ribosomal subunit protein uL18.